The primary structure comprises 336 residues: tRNA N6-adenosine threonylcarbamoyltransferase (336 aa).

Positions 112 and 116 each coordinate Fe cation. Substrate is bound by residues 136 to 140, Asp-169, Gly-182, and Asn-276; that span reads LVSGG. Asp-304 is a binding site for Fe cation.

The protein belongs to the KAE1 / TsaD family. The cofactor is Fe(2+).

It is found in the cytoplasm. It catalyses the reaction L-threonylcarbamoyladenylate + adenosine(37) in tRNA = N(6)-L-threonylcarbamoyladenosine(37) in tRNA + AMP + H(+). Its function is as follows. Required for the formation of a threonylcarbamoyl group on adenosine at position 37 (t(6)A37) in tRNAs that read codons beginning with adenine. Is involved in the transfer of the threonylcarbamoyl moiety of threonylcarbamoyl-AMP (TC-AMP) to the N6 group of A37, together with TsaE and TsaB. TsaD likely plays a direct catalytic role in this reaction. The protein is tRNA N6-adenosine threonylcarbamoyltransferase of Francisella tularensis subsp. holarctica (strain LVS).